We begin with the raw amino-acid sequence, 95 residues long: MKITIADVEHVARLARLELSDEEKQLFAGQMDTILGYVDKLKELNTDGIQPTSHAVPMENAFREDQTRPSIGTAKALANAPDPVLGFFRVPKVIE.

It belongs to the GatC family. Heterotrimer of A, B and C subunits.

It carries out the reaction L-glutamyl-tRNA(Gln) + L-glutamine + ATP + H2O = L-glutaminyl-tRNA(Gln) + L-glutamate + ADP + phosphate + H(+). The catalysed reaction is L-aspartyl-tRNA(Asn) + L-glutamine + ATP + H2O = L-asparaginyl-tRNA(Asn) + L-glutamate + ADP + phosphate + 2 H(+). Allows the formation of correctly charged Asn-tRNA(Asn) or Gln-tRNA(Gln) through the transamidation of misacylated Asp-tRNA(Asn) or Glu-tRNA(Gln) in organisms which lack either or both of asparaginyl-tRNA or glutaminyl-tRNA synthetases. The reaction takes place in the presence of glutamine and ATP through an activated phospho-Asp-tRNA(Asn) or phospho-Glu-tRNA(Gln). This chain is Aspartyl/glutamyl-tRNA(Asn/Gln) amidotransferase subunit C, found in Pelobacter propionicus (strain DSM 2379 / NBRC 103807 / OttBd1).